We begin with the raw amino-acid sequence, 303 residues long: Elongation factor Ts (303 aa).

The interval 80-83 (TDFV) is involved in Mg(2+) ion dislocation from EF-Tu.

It belongs to the EF-Ts family.

The protein resides in the cytoplasm. Associates with the EF-Tu.GDP complex and induces the exchange of GDP to GTP. It remains bound to the aminoacyl-tRNA.EF-Tu.GTP complex up to the GTP hydrolysis stage on the ribosome. The chain is Elongation factor Ts from Clostridium perfringens (strain SM101 / Type A).